The following is a 142-amino-acid chain: Organic hydroperoxide resistance protein-like 2 (142 aa).

Belongs to the OsmC/Ohr family.

The protein is Organic hydroperoxide resistance protein-like 2 of Staphylococcus epidermidis (strain ATCC 35984 / DSM 28319 / BCRC 17069 / CCUG 31568 / BM 3577 / RP62A).